The primary structure comprises 153 residues: UPF0158 protein PA5073 (153 aa).

Belongs to the UPF0158 family.

In Pseudomonas aeruginosa (strain ATCC 15692 / DSM 22644 / CIP 104116 / JCM 14847 / LMG 12228 / 1C / PRS 101 / PAO1), this protein is UPF0158 protein PA5073.